The chain runs to 1820 residues: Histone-lysine N-methyltransferase, H3 lysine-9 specific (1820 aa).

12 disordered regions span residues 1-54 (MPGA…TSMR), 74-251 (NLLP…TPVT), 284-618 (SLSD…APTK), 634-681 (SSER…KKAV), 804-836 (NVDD…SLSK), 850-893 (SSTL…VNSW), 911-944 (HAKK…EQLR), 966-996 (DVES…STDA), 1063-1126 (PLSV…NGAV), 1183-1270 (RYAV…DRTA), 1296-1335 (KASA…TSQQ), and 1385-1407 (RSEP…TDSD). Positions 11-31 (VDNPLVLDSSDSDDNLSGLPL) are enriched in low complexity. Positions 109–129 (ADSSSPPENQNVISFLGNHSQ) are enriched in polar residues. Residues 152–169 (GGENIAGQNNEANAAQAA) are compositionally biased toward low complexity. 2 stretches are compositionally biased toward polar residues: residues 174-204 (GTPS…SAIN) and 212-222 (SIPQQSPSSRA). Composition is skewed to low complexity over residues 226-236 (RSASIASSRSR), 284-311 (SLSD…TSTT), and 339-352 (TPAT…GPSA). Residues 361 to 370 (KSSDQKESPR) are compositionally biased toward basic and acidic residues. A compositionally biased stretch (polar residues) spans 374 to 385 (SKQPSSPSSTHG). Positions 400 to 424 (SATSGKSSAASSRSKSRAPLSSRAA) are enriched in low complexity. Polar residues predominate over residues 433–442 (SKTTSVSSTH). Low complexity predominate over residues 443-459 (PPSRASPSSLPSQSQRQ). Residues 479 to 510 (TLSSGTGQSTPSKFSLPTSDVASNQKNKSTGL) show a composition bias toward polar residues. Low complexity-rich tracts occupy residues 514–531 (PKKP…RTST), 551–563 (QSSS…IQTS), and 594–618 (TKAT…APTK). Composition is skewed to polar residues over residues 643-662 (GKSQ…TAAS) and 810-827 (SAQP…SVSS). Positions 850–861 (SSTLGDSVSGLG) are enriched in low complexity. The span at 869–893 (TQSMPQSPLPTTNTNNSSGIEVNSW) shows a compositional bias: polar residues. 2 stretches are compositionally biased toward basic and acidic residues: residues 917–944 (KERE…EQLR) and 966–983 (DVES…ETRK). Positions 1076–1089 (SSSSTSTPSLLSRS) are enriched in low complexity. The segment covering 1296 to 1320 (KASAVSPVPSANRPSPAPSAKADLL) has biased composition (low complexity). In terms of domain architecture, Pre-SET spans 1516–1585 (LGCDCDGPCD…ECMNRVIQRG (70 aa)). Zn(2+) contacts are provided by Cys-1518, Cys-1520, Cys-1524, Cys-1531, Cys-1533, Cys-1567, Cys-1571, Cys-1573, and Cys-1577. In terms of domain architecture, SET spans 1590–1750 (TGIEIFKTKE…KHEELCISYK (161 aa)). S-adenosyl-L-methionine is bound by residues 1600–1602 (KGW), Tyr-1643, Arg-1704, and 1707–1708 (NH). Cys-1710 is a binding site for Zn(2+). The interval 1756–1794 (DDIPSPEPVKKKKGGKGKKQMSKTSASAHPPEMTALNSD) is disordered. A compositionally biased stretch (basic residues) spans 1765 to 1776 (KKKKGGKGKKQM). A Post-SET domain is found at 1800 to 1816 (VKDICRCGAKNCDGRMF). Cys-1804, Cys-1806, and Cys-1811 together coordinate Zn(2+).

The protein belongs to the class V-like SAM-binding methyltransferase superfamily. Histone-lysine methyltransferase family. Suvar3-9 subfamily.

The protein localises to the nucleus. It is found in the chromosome. The enzyme catalyses N(6)-methyl-L-lysyl(9)-[histone H3] + S-adenosyl-L-methionine = N(6),N(6)-dimethyl-L-lysyl(9)-[histone H3] + S-adenosyl-L-homocysteine + H(+). It catalyses the reaction L-lysyl(9)-[histone H3] + S-adenosyl-L-methionine = N(6)-methyl-L-lysyl(9)-[histone H3] + S-adenosyl-L-homocysteine + H(+). Histone methyltransferase that specifically dimethylates histone H3 to form H3K9me2. H3K9me2 represents a specific tag for epigenetic transcriptional repression by recruiting HP1 proteins to methylated histones. Mainly functions in heterochromatin regions, thereby playing a central role in the establishment of constitutive heterochromatin at centromeric regions. The polypeptide is Histone-lysine N-methyltransferase, H3 lysine-9 specific (Cryptococcus neoformans var. grubii serotype A (strain H99 / ATCC 208821 / CBS 10515 / FGSC 9487) (Filobasidiella neoformans var. grubii)).